The chain runs to 429 residues: Adenylosuccinate synthetase (429 aa).

Residues 13–19 (GDEGKGK) and 41–43 (GHT) contribute to the GTP site. Aspartate 14 (proton acceptor) is an active-site residue. Aspartate 14 and glycine 41 together coordinate Mg(2+). IMP-binding positions include 14-17 (DEGK), 39-42 (NAGH), threonine 130, arginine 144, glutamine 224, threonine 239, and arginine 303. Histidine 42 acts as the Proton donor in catalysis. 299 to 305 (ATTGRAR) is a substrate binding site. GTP contacts are provided by residues arginine 305, 331–333 (KLD), and 412–414 (STG).

Belongs to the adenylosuccinate synthetase family. In terms of assembly, homodimer. It depends on Mg(2+) as a cofactor.

Its subcellular location is the cytoplasm. It catalyses the reaction IMP + L-aspartate + GTP = N(6)-(1,2-dicarboxyethyl)-AMP + GDP + phosphate + 2 H(+). It participates in purine metabolism; AMP biosynthesis via de novo pathway; AMP from IMP: step 1/2. Functionally, plays an important role in the de novo pathway of purine nucleotide biosynthesis. Catalyzes the first committed step in the biosynthesis of AMP from IMP. The sequence is that of Adenylosuccinate synthetase from Psychrobacter arcticus (strain DSM 17307 / VKM B-2377 / 273-4).